The chain runs to 638 residues: Nucleolar protein 4 (638 aa).

Disordered regions lie at residues 210 to 312, 343 to 403, 503 to 535, and 573 to 603; these read QQDE…SPLS, EREA…TDGV, NAAKRMRLERQQDESAPADKQCKPEATQATYST, and SSGPTDLSMKRQLATSSGSSSSSNSRPQLSP. Positions 211–225 are enriched in acidic residues; the sequence is QDEDESSIESDEFDM. Composition is skewed to polar residues over residues 229–254, 263–281, 302–312, and 351–363; these read TRMSAVNSDLSSNLEERMQSPQNLHG, ESFNGNETLGHSSIASGGT, QPLNLSDSPLS, and SKSPAHSYSSYDS. 3 stretches are compositionally biased toward basic and acidic residues: residues 364 to 374, 391 to 403, and 503 to 515; these read GKNESVDRGAE, HDDSEKVNETDGV, and NAAKRMRLERQQD. Residues 588–597 show a composition bias toward low complexity; the sequence is SSGSSSSSNS.

As to expression, expressed predominantly in fetal brain, adult brain and testis.

The protein localises to the nucleus. The protein resides in the nucleolus. The sequence is that of Nucleolar protein 4 (NOL4) from Homo sapiens (Human).